The chain runs to 129 residues: Ropporin-1 (129 aa).

The RIIa domain maps to 11 to 34; it reads PELPELLKTQPPDLIQWAAEYFGA.

The protein belongs to the ropporin family. As to quaternary structure, homodimer. Interacts with AKAP3. May interact with SPA17. Interacts with RHPN1. Interacts with FSCB; the interaction increases upon spermatozoa capacitation conditions. Interacts with CFAP61. In terms of processing, sumoylated, sumoylation decreases upon spermatozoa capacitation conditions.

The protein resides in the cell projection. Its subcellular location is the cilium. It localises to the flagellum. Its function is as follows. Important for male fertility. With ROPN1L, involved in fibrous sheath integrity and sperm motility, plays a role in PKA-dependent signaling processes required for spermatozoa capacitation. The protein is Ropporin-1 of Mesocricetus auratus (Golden hamster).